A 215-amino-acid polypeptide reads, in one-letter code: MKPEQLVYLNPRQHRIYIASPLNEYMLSDYLKQRNLQTFAKTNIKVPADFGFYISKFVDLVSAVKAIHSVNIVHHNINPEDIFMTGPDFDLYVGGMFGSLYKTFIKNNPQNITLYAAPEQIKKVYTPKNDMYSLGIVLFELIMPFKTALERETTLTNFRNNVQQMPASLSQGHPKLTEIVCKLIQHDYSQRPDAEWLLKEMEQLLLEYTTCSKKL.

The Protein kinase domain occupies 1–205; that stretch reads MKPEQLVYLN…WLLKEMEQLL (205 aa).

It belongs to the protein kinase superfamily. Ser/Thr protein kinase family. As to quaternary structure, interacts with the kinase domain of host EIF2AK2.

Its subcellular location is the host cytoplasm. The enzyme catalyses L-seryl-[protein] + ATP = O-phospho-L-seryl-[protein] + ADP + H(+). It catalyses the reaction L-threonyl-[protein] + ATP = O-phospho-L-threonyl-[protein] + ADP + H(+). Plays a role in the inhibition of host eIF2alpha/EIF2S1 phosphorylation, thereby increasing viral fitness. In the insect host, targets the endogenous insect heme-regulated inhibitor (HRI)-like eIF2alpha kinase. The sequence is that of Probable serine/threonine-protein kinase 2 (PK2) from Autographa californica nuclear polyhedrosis virus (AcMNPV).